Consider the following 500-residue polypeptide: Maturase K (500 aa).

Belongs to the intron maturase 2 family. MatK subfamily.

The protein resides in the plastid. It localises to the chloroplast. Functionally, usually encoded in the trnK tRNA gene intron. Probably assists in splicing its own and other chloroplast group II introns. This chain is Maturase K, found in Adiantum capillus-veneris (Maidenhair fern).